Reading from the N-terminus, the 155-residue chain is Small ribosomal subunit protein uS7 (155 aa).

This sequence belongs to the universal ribosomal protein uS7 family. As to quaternary structure, part of the 30S ribosomal subunit. Contacts proteins S9 and S11.

One of the primary rRNA binding proteins, it binds directly to 16S rRNA where it nucleates assembly of the head domain of the 30S subunit. Is located at the subunit interface close to the decoding center, probably blocks exit of the E-site tRNA. In Thermosipho africanus (strain TCF52B), this protein is Small ribosomal subunit protein uS7.